Here is a 317-residue protein sequence, read N- to C-terminus: tRNA(Ile)-lysidine synthase (317 aa).

30 to 35 (SGGSDS) provides a ligand contact to ATP.

This sequence belongs to the tRNA(Ile)-lysidine synthase family.

Its subcellular location is the cytoplasm. The enzyme catalyses cytidine(34) in tRNA(Ile2) + L-lysine + ATP = lysidine(34) in tRNA(Ile2) + AMP + diphosphate + H(+). In terms of biological role, ligates lysine onto the cytidine present at position 34 of the AUA codon-specific tRNA(Ile) that contains the anticodon CAU, in an ATP-dependent manner. Cytidine is converted to lysidine, thus changing the amino acid specificity of the tRNA from methionine to isoleucine. This is tRNA(Ile)-lysidine synthase from Chlamydia caviae (strain ATCC VR-813 / DSM 19441 / 03DC25 / GPIC) (Chlamydophila caviae).